A 347-amino-acid polypeptide reads, in one-letter code: NADH-quinone oxidoreductase subunit H (347 aa).

Transmembrane regions (helical) follow at residues 13–33 (LIIALKSVVLLVVLLIVVAYL), 50–70 (PNVVGPWGLFQAFADLLKFVF), 82–102 (GVFLLAPFISAVLAMATWAVI), 115–135 (VGILYIFAISSLEVYGVIMGG), 161–181 (IGFVIVTVLLTVGSLNLTDIV), 198–218 (FLDWNWLCLFPMFVVFFISAL), 248–268 (FLLFFLGEYVAITLMCALMTV), 286–306 (VPGIIWFMLKLCFCFFLFAMV), and 325–345 (VFLPISLFMVVATATFLKVFG).

The protein belongs to the complex I subunit 1 family. In terms of assembly, NDH-1 is composed of 14 different subunits. Subunits NuoA, H, J, K, L, M, N constitute the membrane sector of the complex.

Its subcellular location is the cell inner membrane. It carries out the reaction a quinone + NADH + 5 H(+)(in) = a quinol + NAD(+) + 4 H(+)(out). In terms of biological role, NDH-1 shuttles electrons from NADH, via FMN and iron-sulfur (Fe-S) centers, to quinones in the respiratory chain. The immediate electron acceptor for the enzyme in this species is believed to be ubiquinone. Couples the redox reaction to proton translocation (for every two electrons transferred, four hydrogen ions are translocated across the cytoplasmic membrane), and thus conserves the redox energy in a proton gradient. This subunit may bind ubiquinone. This Brucella abortus (strain 2308) protein is NADH-quinone oxidoreductase subunit H.